The primary structure comprises 159 residues: Probable inactive acireductone dioxygenase 1 (159 aa).

This sequence belongs to the acireductone dioxygenase (ARD) family.

The protein resides in the cytoplasm. It localises to the nucleus. Probable inactive acireductone dioxygenase. In Caenorhabditis elegans, this protein is Probable inactive acireductone dioxygenase 1.